The sequence spans 125 residues: Actin, alpha skeletal muscle (125 aa).

This sequence belongs to the actin family. Polymerization of globular actin (G-actin) leads to a structural filament (F-actin) in the form of a two-stranded helix. Each actin can bind to 4 others. In terms of processing, methylated at His-75 by SETD3.

The protein resides in the cytoplasm. It localises to the cytoskeleton. Its function is as follows. Actins are highly conserved proteins that are involved in various types of cell motility and are ubiquitously expressed in all eukaryotic cells. The sequence is that of Actin, alpha skeletal muscle from Pleurodeles waltl (Iberian ribbed newt).